Here is a 168-residue protein sequence, read N- to C-terminus: Large ribosomal subunit protein uL10 (168 aa).

Belongs to the universal ribosomal protein uL10 family. As to quaternary structure, part of the ribosomal stalk of the 50S ribosomal subunit. The N-terminus interacts with L11 and the large rRNA to form the base of the stalk. The C-terminus forms an elongated spine to which L12 dimers bind in a sequential fashion forming a multimeric L10(L12)X complex.

In terms of biological role, forms part of the ribosomal stalk, playing a central role in the interaction of the ribosome with GTP-bound translation factors. This is Large ribosomal subunit protein uL10 (rplJ) from Buchnera aphidicola subsp. Baizongia pistaciae (strain Bp).